A 376-amino-acid polypeptide reads, in one-letter code: Succinyl-diaminopimelate desuccinylase (376 aa).

His-66 is a binding site for Zn(2+). Residue Asp-68 is part of the active site. Asp-99 provides a ligand contact to Zn(2+). Residue Glu-133 is the Proton acceptor of the active site. Zn(2+) is bound by residues Glu-134, Glu-162, and His-348.

This sequence belongs to the peptidase M20A family. DapE subfamily. As to quaternary structure, homodimer. Zn(2+) serves as cofactor. The cofactor is Co(2+).

It catalyses the reaction N-succinyl-(2S,6S)-2,6-diaminopimelate + H2O = (2S,6S)-2,6-diaminopimelate + succinate. The protein operates within amino-acid biosynthesis; L-lysine biosynthesis via DAP pathway; LL-2,6-diaminopimelate from (S)-tetrahydrodipicolinate (succinylase route): step 3/3. Its function is as follows. Catalyzes the hydrolysis of N-succinyl-L,L-diaminopimelic acid (SDAP), forming succinate and LL-2,6-diaminopimelate (DAP), an intermediate involved in the bacterial biosynthesis of lysine and meso-diaminopimelic acid, an essential component of bacterial cell walls. This chain is Succinyl-diaminopimelate desuccinylase, found in Nitrosococcus oceani (strain ATCC 19707 / BCRC 17464 / JCM 30415 / NCIMB 11848 / C-107).